An 85-amino-acid chain; its full sequence is UPF0297 protein LBUL_1485 (85 aa).

This sequence belongs to the UPF0297 family.

In Lactobacillus delbrueckii subsp. bulgaricus (strain ATCC BAA-365 / Lb-18), this protein is UPF0297 protein LBUL_1485.